Reading from the N-terminus, the 220-residue chain is Deoxyribose-phosphate aldolase (220 aa).

Residue Asp-89 is the Proton donor/acceptor of the active site. Lys-151 serves as the catalytic Schiff-base intermediate with acetaldehyde. The active-site Proton donor/acceptor is Lys-180.

This sequence belongs to the DeoC/FbaB aldolase family. DeoC type 1 subfamily.

It localises to the cytoplasm. The catalysed reaction is 2-deoxy-D-ribose 5-phosphate = D-glyceraldehyde 3-phosphate + acetaldehyde. It functions in the pathway carbohydrate degradation; 2-deoxy-D-ribose 1-phosphate degradation; D-glyceraldehyde 3-phosphate and acetaldehyde from 2-deoxy-alpha-D-ribose 1-phosphate: step 2/2. Functionally, catalyzes a reversible aldol reaction between acetaldehyde and D-glyceraldehyde 3-phosphate to generate 2-deoxy-D-ribose 5-phosphate. The sequence is that of Deoxyribose-phosphate aldolase from Staphylococcus epidermidis (strain ATCC 12228 / FDA PCI 1200).